A 480-amino-acid polypeptide reads, in one-letter code: Glutamate--tRNA ligase (480 aa).

Positions proline 9 to threonine 19 match the 'HIGH' region motif. The 'KMSKS' region motif lies at lysine 247 to arginine 251. An ATP-binding site is contributed by lysine 250.

The protein belongs to the class-I aminoacyl-tRNA synthetase family. Glutamate--tRNA ligase type 1 subfamily. In terms of assembly, monomer.

Its subcellular location is the cytoplasm. The enzyme catalyses tRNA(Glu) + L-glutamate + ATP = L-glutamyl-tRNA(Glu) + AMP + diphosphate. In terms of biological role, catalyzes the attachment of glutamate to tRNA(Glu) in a two-step reaction: glutamate is first activated by ATP to form Glu-AMP and then transferred to the acceptor end of tRNA(Glu). The protein is Glutamate--tRNA ligase of Nostoc sp. (strain PCC 7120 / SAG 25.82 / UTEX 2576).